The sequence spans 729 residues: 1,4-alpha-glucan branching enzyme GlgB 2 (729 aa).

The Nucleophile role is filled by Asp408. Residue Glu461 is the Proton donor of the active site.

This sequence belongs to the glycosyl hydrolase 13 family. GlgB subfamily. As to quaternary structure, monomer.

The enzyme catalyses Transfers a segment of a (1-&gt;4)-alpha-D-glucan chain to a primary hydroxy group in a similar glucan chain.. It functions in the pathway glycan biosynthesis; glycogen biosynthesis. In terms of biological role, catalyzes the formation of the alpha-1,6-glucosidic linkages in glycogen by scission of a 1,4-alpha-linked oligosaccharide from growing alpha-1,4-glucan chains and the subsequent attachment of the oligosaccharide to the alpha-1,6 position. The sequence is that of 1,4-alpha-glucan branching enzyme GlgB 2 from Xanthomonas campestris pv. campestris (strain 8004).